A 177-amino-acid chain; its full sequence is Ribulose bisphosphate carboxylase small subunit, chloroplastic 5 (177 aa).

The transit peptide at 1-56 (MASSMMASTAAVARAGPAQSSMVAPFNGLRSSVAFPATRKANNDLSTLPSNGGRVS) directs the protein to the chloroplast.

The protein belongs to the RuBisCO small chain family. As to quaternary structure, heterohexadecamer of 8 large and 8 small subunits.

The protein localises to the plastid. It is found in the chloroplast. In terms of biological role, ruBisCO catalyzes two reactions: the carboxylation of D-ribulose 1,5-bisphosphate, the primary event in carbon dioxide fixation, as well as the oxidative fragmentation of the pentose substrate. Both reactions occur simultaneously and in competition at the same active site. Although the small subunit is not catalytic it is essential for maximal activity. The chain is Ribulose bisphosphate carboxylase small subunit, chloroplastic 5 from Lemna gibba (Swollen duckweed).